A 39-amino-acid chain; its full sequence is Metallocarboxypeptidase inhibitor (39 aa).

Gln-1 bears the Pyrrolidone carboxylic acid mark. Disulfide bonds link Cys-8–Cys-24, Cys-12–Cys-27, and Cys-18–Cys-34.

In terms of tissue distribution, highly concentrated in tubers. Closely related but distinct forms of MCPI are present in leaves, stems and buds.

Functionally, may play a defensive role against insect attacks. Inhibits A.aegypti carboxypeptidase CPB1. The chain is Metallocarboxypeptidase inhibitor from Solanum tuberosum (Potato).